The following is a 539-amino-acid chain: MDSQRTLLVLLLALVSFLLFQQWQVAKNPAPQAVEQAQTSSTLPAPSFADELDPAPAQQASAKLITVTTDVLTLSIDTVGGDVVAADLNQYSAELNSANAFELLRDTQGHQFIAQSGLVGPQGIDLSSNNRPSYQVSADSFTLADDQNELRIPMTYQANGLEYTKTFILKRGSYAIDVEFDVINKSGNNATLGMYAHLRQNLMDAGGSITMPTYRGGAYSTEDTRYKKYSFEDMQDRNLSLTLTNGQGWAAMIQHYFAAAWIPRNEPGANLYTRVIGNMGDIGVRMPNKTIADGDSAHFTATLWAGPKLQDQMAEVAPNLDLVVDYGWLWFIAKPLHWLLSVIQSFVGNWGVAIICLTFIVRGAMYPLTKAQYTSMAKMRMLQPKLQAMRERIGDDRQRMSQEMMELYKKEKVNPLGGCLPLILQMPIFIALYWALMESVELRHSPFILWIHDLSAQDPYFILPLLMGGSMFLIQKMSPTTVTDPMQQKIMTFMPVMFTFFFLWFPSGLVLYWLVSNIVTLIQQSLIYKALEKKGLHTK.

5 consecutive transmembrane segments (helical) span residues T6–A26, S341–V361, L416–L436, L454–I474, and P495–V515.

The protein belongs to the OXA1/ALB3/YidC family. Type 1 subfamily. In terms of assembly, interacts with the Sec translocase complex via SecD. Specifically interacts with transmembrane segments of nascent integral membrane proteins during membrane integration.

The protein resides in the cell inner membrane. Its function is as follows. Required for the insertion and/or proper folding and/or complex formation of integral membrane proteins into the membrane. Involved in integration of membrane proteins that insert both dependently and independently of the Sec translocase complex, as well as at least some lipoproteins. Aids folding of multispanning membrane proteins. The polypeptide is Membrane protein insertase YidC (Vibrio vulnificus (strain CMCP6)).